The primary structure comprises 306 residues: tRNA pseudouridine synthase B (306 aa).

Asp43 functions as the Nucleophile in the catalytic mechanism.

Belongs to the pseudouridine synthase TruB family. Type 1 subfamily.

It carries out the reaction uridine(55) in tRNA = pseudouridine(55) in tRNA. Its function is as follows. Responsible for synthesis of pseudouridine from uracil-55 in the psi GC loop of transfer RNAs. The chain is tRNA pseudouridine synthase B from Heliobacterium modesticaldum (strain ATCC 51547 / Ice1).